A 144-amino-acid chain; its full sequence is 3-hydroxyacyl-[acyl-carrier-protein] dehydratase FabZ (144 aa).

The active site involves histidine 48.

It belongs to the thioester dehydratase family. FabZ subfamily.

Its subcellular location is the cytoplasm. It carries out the reaction a (3R)-hydroxyacyl-[ACP] = a (2E)-enoyl-[ACP] + H2O. Functionally, involved in unsaturated fatty acids biosynthesis. Catalyzes the dehydration of short chain beta-hydroxyacyl-ACPs and long chain saturated and unsaturated beta-hydroxyacyl-ACPs. This chain is 3-hydroxyacyl-[acyl-carrier-protein] dehydratase FabZ, found in Bacillus licheniformis (strain ATCC 14580 / DSM 13 / JCM 2505 / CCUG 7422 / NBRC 12200 / NCIMB 9375 / NCTC 10341 / NRRL NRS-1264 / Gibson 46).